The sequence spans 166 residues: Ribosome maturation factor RimM (166 aa).

Residues 90-163 (EGEFLVSQII…TVTIELLEGL (74 aa)) enclose the PRC barrel domain.

Belongs to the RimM family. In terms of assembly, binds ribosomal protein uS19.

The protein resides in the cytoplasm. In terms of biological role, an accessory protein needed during the final step in the assembly of 30S ribosomal subunit, possibly for assembly of the head region. Essential for efficient processing of 16S rRNA. May be needed both before and after RbfA during the maturation of 16S rRNA. It has affinity for free ribosomal 30S subunits but not for 70S ribosomes. The chain is Ribosome maturation factor RimM from Oenococcus oeni (strain ATCC BAA-331 / PSU-1).